The primary structure comprises 1042 residues: Isoleucine--tRNA ligase (1042 aa).

A 'HIGH' region motif is present at residues 48–58 (PFATGLPHFGH). Positions 594 to 598 (KMSKS) match the 'KMSKS' region motif. Lys-597 provides a ligand contact to ATP.

This sequence belongs to the class-I aminoacyl-tRNA synthetase family. IleS type 2 subfamily. As to quaternary structure, monomer. It depends on Zn(2+) as a cofactor.

The protein resides in the cytoplasm. The enzyme catalyses tRNA(Ile) + L-isoleucine + ATP = L-isoleucyl-tRNA(Ile) + AMP + diphosphate. Functionally, catalyzes the attachment of isoleucine to tRNA(Ile). As IleRS can inadvertently accommodate and process structurally similar amino acids such as valine, to avoid such errors it has two additional distinct tRNA(Ile)-dependent editing activities. One activity is designated as 'pretransfer' editing and involves the hydrolysis of activated Val-AMP. The other activity is designated 'posttransfer' editing and involves deacylation of mischarged Val-tRNA(Ile). The chain is Isoleucine--tRNA ligase from Borreliella burgdorferi (strain ZS7) (Borrelia burgdorferi).